A 440-amino-acid polypeptide reads, in one-letter code: Chromosome partition protein MukF (440 aa).

Residues Leu-208 to Ile-236 form a leucine-zipper region.

Belongs to the MukF family. As to quaternary structure, interacts, and probably forms a ternary complex, with MukE and MukB via its C-terminal region. The complex formation is stimulated by calcium or magnesium. It is required for an interaction between MukE and MukB.

It is found in the cytoplasm. It localises to the nucleoid. Involved in chromosome condensation, segregation and cell cycle progression. May participate in facilitating chromosome segregation by condensation DNA from both sides of a centrally located replisome during cell division. Not required for mini-F plasmid partitioning. Probably acts via its interaction with MukB and MukE. Overexpression results in anucleate cells. It has a calcium binding activity. This chain is Chromosome partition protein MukF, found in Citrobacter koseri (strain ATCC BAA-895 / CDC 4225-83 / SGSC4696).